The sequence spans 750 residues: 5-methyltetrahydropteroyltriglutamate--homocysteine methyltransferase (750 aa).

Residues 15–18 and lysine 114 each bind 5-methyltetrahydropteroyltri-L-glutamate; that span reads RELK. Residues 425 to 427 and glutamate 478 each bind L-homocysteine; that span reads IGS. L-methionine is bound by residues 425 to 427 and glutamate 478; that span reads IGS. Residue tryptophan 555 participates in 5-methyltetrahydropteroyltri-L-glutamate binding. Aspartate 593 is a binding site for L-homocysteine. An L-methionine-binding site is contributed by aspartate 593. 5-methyltetrahydropteroyltri-L-glutamate is bound at residue glutamate 599. Residues histidine 636, cysteine 638, and glutamate 660 each coordinate Zn(2+). Histidine 689 acts as the Proton donor in catalysis. Cysteine 721 contributes to the Zn(2+) binding site.

It belongs to the vitamin-B12 independent methionine synthase family. Zn(2+) serves as cofactor.

The catalysed reaction is 5-methyltetrahydropteroyltri-L-glutamate + L-homocysteine = tetrahydropteroyltri-L-glutamate + L-methionine. The protein operates within amino-acid biosynthesis; L-methionine biosynthesis via de novo pathway; L-methionine from L-homocysteine (MetE route): step 1/1. Functionally, catalyzes the transfer of a methyl group from 5-methyltetrahydrofolate to homocysteine resulting in methionine formation. The sequence is that of 5-methyltetrahydropteroyltriglutamate--homocysteine methyltransferase from Streptococcus gordonii (strain Challis / ATCC 35105 / BCRC 15272 / CH1 / DL1 / V288).